The following is a 621-amino-acid chain: F-box only protein 21 (621 aa).

Positions 28–77 constitute an F-box domain; that stretch reads SCLVNLPGEVLEYILCCGSLTAADIGRVSSTCRRLRELCQSSGKVWKEQF.

In terms of assembly, interacts with SKP1 and CUL1.

Functionally, substrate-recognition component of the SCF (SKP1-CUL1-F-box protein)-type E3 ubiquitin ligase complex. In Pongo abelii (Sumatran orangutan), this protein is F-box only protein 21 (FBXO21).